The following is a 214-amino-acid chain: dITP/XTP pyrophosphatase (214 aa).

13–18 (SHNKGK) contacts substrate. Positions 45 and 74 each coordinate Mg(2+). Catalysis depends on Asp-74, which acts as the Proton acceptor. Residues Ser-75, 163-166 (FGYD), Lys-186, and 199-200 (HR) contribute to the substrate site.

This sequence belongs to the HAM1 NTPase family. In terms of assembly, homodimer. The cofactor is Mg(2+).

The enzyme catalyses XTP + H2O = XMP + diphosphate + H(+). It carries out the reaction dITP + H2O = dIMP + diphosphate + H(+). The catalysed reaction is ITP + H2O = IMP + diphosphate + H(+). Its function is as follows. Pyrophosphatase that catalyzes the hydrolysis of nucleoside triphosphates to their monophosphate derivatives, with a high preference for the non-canonical purine nucleotides XTP (xanthosine triphosphate), dITP (deoxyinosine triphosphate) and ITP. Seems to function as a house-cleaning enzyme that removes non-canonical purine nucleotides from the nucleotide pool, thus preventing their incorporation into DNA/RNA and avoiding chromosomal lesions. The sequence is that of dITP/XTP pyrophosphatase from Agrobacterium fabrum (strain C58 / ATCC 33970) (Agrobacterium tumefaciens (strain C58)).